The chain runs to 304 residues: Olfactory receptor 8G2 (304 aa).

The Extracellular segment spans residues 1-41 (MVFLSSVETDQRKMSAGNHSSVTEFILAGLSEQPELQLRLF). N-linked (GlcNAc...) asparagine glycosylation occurs at asparagine 18. The chain crosses the membrane as a helical span at residues 42-62 (LLFLGIYVVTVVGNLSMITLI). The Cytoplasmic segment spans residues 63–69 (GLSSHLH). Residues 70–90 (TPMYYFLSGLSFIDLCHSTII) form a helical membrane-spanning segment. Topologically, residues 91–110 (TPKMLVNFVTEKNIISYPEC) are extracellular. A disulfide bond links cysteine 110 and cysteine 192. The helical transmembrane segment at 111–130 (MTQLYFFLIFAIAECHMLAV) threads the bilayer. Topologically, residues 131 to 154 (TAYDRYVAICSPLLYNVIMSYHHC) are cytoplasmic. A helical transmembrane segment spans residues 155-175 (FWLTVGVYVLGILGSTIHTGF). Topologically, residues 176-193 (MLRLFLCKTNVINHYFCD) are extracellular. The helical transmembrane segment at 194–214 (LFPLLGLSCSSTYINELLVLV) threads the bilayer. Residues 215-217 (LSA) lie on the Cytoplasmic side of the membrane. A helical transmembrane segment spans residues 218-238 (FNILTPALTILASYIFIIASI). Topologically, residues 239-257 (LRIRSTEGRSKAFSTCSSH) are extracellular. A helical membrane pass occupies residues 258–278 (ILAVAVFFGSAAFMYLQPSSV). The Cytoplasmic segment spans residues 279–304 (SSMDQRKVSSVFYTTIVPMLNPQSIA).

The protein belongs to the G-protein coupled receptor 1 family.

It localises to the cell membrane. Odorant receptor. This chain is Olfactory receptor 8G2, found in Homo sapiens (Human).